Reading from the N-terminus, the 612-residue chain is MSKITIKTLKFSNVMSYGKDIVIHFDKNPVTQLIGGNGLGKSTIATVIEELFYNKNSRGIKKDALFSWNAPKKEYDMHAYFSKDEDEYELHKVVKSTAKVTLIKNGEDISGHTATQTYKMIEEIMGGDFQTFTKLIYQSVGSNLDFLKATDATRKAFLVNLFNQEQYKEMSETIKADRKEIANTLNNLQGQMAVITKILNGKNNLGTLQEPVEVPEFDEEPLAQELTESKIKAALAKSQEANITKLRNLDKAVQVAEQSFEPFKNLPAPTDQNEEISSVTRDLTIVTSRASEVKKRYQKFKQEASNTECPTCGTHLNTTAAQKAMDMARVEYDPLFKEKQSLEAKLEQLKKEQLEYVAYTRAKDALDKAVVARDEFKNSMSDASFEELNVQILQVQIRQLEQEIADGRSKVAIAKEHNATVELANAKYKAKLEQIEKAEAEMTEITSKLDGVSEAVADLDILIAALKNLVGYKLEHSVKVFEELINKYLSIMTGGKFALGFELDETKLQVVIFNDGNRTSMENCSTGQQSRINLATLLAIRMLLTSISKVNINLLFLDEVISFIDTKGLDTLVELLNEEESLNSIIVSHGHTHPLAHKITVKKDAEGFSYLE.

35-42 (GGNGLGKS) is an ATP binding site. Coiled-coil stretches lie at residues 163–193 (NQEQ…GQMA) and 288–459 (SRAS…VADL).

This sequence to phage T4 protein GP46. As to quaternary structure, could consist of two subunits: D13 and D12.

Possible exonuclease that may play a role in viral genome replication, DNA recombination, and host DNA degradation. The chain is Probable exonuclease subunit 2 (D13) from Escherichia phage T5 (Enterobacteria phage T5).